Reading from the N-terminus, the 513-residue chain is Bifunctional purine biosynthesis protein PurH (513 aa).

Positions 1–144 constitute an MGS-like domain; that stretch reads MKRALVSVSD…KNYRDVTIVV (144 aa).

The protein belongs to the PurH family.

The catalysed reaction is (6R)-10-formyltetrahydrofolate + 5-amino-1-(5-phospho-beta-D-ribosyl)imidazole-4-carboxamide = 5-formamido-1-(5-phospho-D-ribosyl)imidazole-4-carboxamide + (6S)-5,6,7,8-tetrahydrofolate. It catalyses the reaction IMP + H2O = 5-formamido-1-(5-phospho-D-ribosyl)imidazole-4-carboxamide. The protein operates within purine metabolism; IMP biosynthesis via de novo pathway; 5-formamido-1-(5-phospho-D-ribosyl)imidazole-4-carboxamide from 5-amino-1-(5-phospho-D-ribosyl)imidazole-4-carboxamide (10-formyl THF route): step 1/1. It functions in the pathway purine metabolism; IMP biosynthesis via de novo pathway; IMP from 5-formamido-1-(5-phospho-D-ribosyl)imidazole-4-carboxamide: step 1/1. The sequence is that of Bifunctional purine biosynthesis protein PurH from Lactobacillus delbrueckii subsp. bulgaricus (strain ATCC BAA-365 / Lb-18).